A 352-amino-acid polypeptide reads, in one-letter code: Phosphoribosylformylglycinamidine cyclo-ligase (352 aa).

This sequence belongs to the AIR synthase family.

It is found in the cytoplasm. The enzyme catalyses 2-formamido-N(1)-(5-O-phospho-beta-D-ribosyl)acetamidine + ATP = 5-amino-1-(5-phospho-beta-D-ribosyl)imidazole + ADP + phosphate + H(+). It functions in the pathway purine metabolism; IMP biosynthesis via de novo pathway; 5-amino-1-(5-phospho-D-ribosyl)imidazole from N(2)-formyl-N(1)-(5-phospho-D-ribosyl)glycinamide: step 2/2. The chain is Phosphoribosylformylglycinamidine cyclo-ligase from Teredinibacter turnerae (strain ATCC 39867 / T7901).